The chain runs to 387 residues: Succinate--CoA ligase [ADP-forming] subunit beta (387 aa).

The 236-residue stretch at 9–244 (KQLFASYGLP…VSQEDDRENR (236 aa)) folds into the ATP-grasp domain. Residues lysine 46, 53–55 (GRG), glutamate 99, cysteine 102, and glutamate 107 contribute to the ATP site. Positions 199 and 213 each coordinate Mg(2+). Substrate is bound by residues asparagine 264 and 321-323 (GIV).

The protein belongs to the succinate/malate CoA ligase beta subunit family. As to quaternary structure, heterotetramer of two alpha and two beta subunits. Requires Mg(2+) as cofactor.

The enzyme catalyses succinate + ATP + CoA = succinyl-CoA + ADP + phosphate. The catalysed reaction is GTP + succinate + CoA = succinyl-CoA + GDP + phosphate. It functions in the pathway carbohydrate metabolism; tricarboxylic acid cycle; succinate from succinyl-CoA (ligase route): step 1/1. Its function is as follows. Succinyl-CoA synthetase functions in the citric acid cycle (TCA), coupling the hydrolysis of succinyl-CoA to the synthesis of either ATP or GTP and thus represents the only step of substrate-level phosphorylation in the TCA. The beta subunit provides nucleotide specificity of the enzyme and binds the substrate succinate, while the binding sites for coenzyme A and phosphate are found in the alpha subunit. The protein is Succinate--CoA ligase [ADP-forming] subunit beta of Legionella pneumophila (strain Paris).